The chain runs to 50 residues: uncharacterized protein (50 aa).

This is an uncharacterized protein from Haemophilus influenzae (strain ATCC 51907 / DSM 11121 / KW20 / Rd).